The chain runs to 448 residues: Ribosomal protein uS12 methylthiotransferase RimO (448 aa).

The region spanning 16–126 is the MTTase N-terminal domain; the sequence is PKISFVSLGC…VVAAVHEAVP (111 aa). Cys-25, Cys-61, Cys-90, Cys-157, Cys-161, and Cys-164 together coordinate [4Fe-4S] cluster. In terms of domain architecture, Radical SAM core spans 143-380; that stretch reads LTPRHYAYLK…METQNGIALR (238 aa). The TRAM domain maps to 383–448; sequence RAKVGKRLPV…EAYDLYGSVA (66 aa).

The protein belongs to the methylthiotransferase family. RimO subfamily. [4Fe-4S] cluster serves as cofactor.

The protein resides in the cytoplasm. It carries out the reaction L-aspartate(89)-[ribosomal protein uS12]-hydrogen + (sulfur carrier)-SH + AH2 + 2 S-adenosyl-L-methionine = 3-methylsulfanyl-L-aspartate(89)-[ribosomal protein uS12]-hydrogen + (sulfur carrier)-H + 5'-deoxyadenosine + L-methionine + A + S-adenosyl-L-homocysteine + 2 H(+). Its function is as follows. Catalyzes the methylthiolation of an aspartic acid residue of ribosomal protein uS12. The protein is Ribosomal protein uS12 methylthiotransferase RimO of Methylobacterium radiotolerans (strain ATCC 27329 / DSM 1819 / JCM 2831 / NBRC 15690 / NCIMB 10815 / 0-1).